The sequence spans 156 residues: Phosphopantetheine adenylyltransferase (156 aa).

Ser9 contributes to the substrate binding site. ATP is bound by residues 9–10 (SF) and His17. Substrate-binding residues include Lys41, Ile74, and Lys88. ATP contacts are provided by residues 89–91 (GLR), Glu99, and 123–129 (LLHVSSS).

It belongs to the bacterial CoaD family. In terms of assembly, homohexamer. It depends on Mg(2+) as a cofactor.

It localises to the cytoplasm. The catalysed reaction is (R)-4'-phosphopantetheine + ATP + H(+) = 3'-dephospho-CoA + diphosphate. It functions in the pathway cofactor biosynthesis; coenzyme A biosynthesis; CoA from (R)-pantothenate: step 4/5. Its function is as follows. Reversibly transfers an adenylyl group from ATP to 4'-phosphopantetheine, yielding dephospho-CoA (dPCoA) and pyrophosphate. The chain is Phosphopantetheine adenylyltransferase from Kocuria rhizophila (strain ATCC 9341 / DSM 348 / NBRC 103217 / DC2201).